The primary structure comprises 156 residues: MSLLIDFIDETEEVKDEYISLIRGLVEKAAQMENIEEGAELSVTFVDNERIREINRDYRDKDQPTDVISFAMEEMGEGEMEIVGAEMPRMLGDLIISIPRAKEQAEEYGHSFDRELGFLALHGFLHLLGYDHMTEEDEKEMFGRQKEILEAFGLGR.

Zn(2+)-binding residues include His122, His126, and His132.

It belongs to the endoribonuclease YbeY family. Requires Zn(2+) as cofactor.

Its subcellular location is the cytoplasm. Single strand-specific metallo-endoribonuclease involved in late-stage 70S ribosome quality control and in maturation of the 3' terminus of the 16S rRNA. The polypeptide is Endoribonuclease YbeY (Bacillus mycoides (strain KBAB4) (Bacillus weihenstephanensis)).